A 371-amino-acid chain; its full sequence is Leu/Ile/Val-binding protein homolog 1 (371 aa).

Residues 1–23 form the signal peptide; the sequence is MRKTLFSGVALAAVIAFGGSAWA.

It belongs to the leucine-binding protein family.

In terms of biological role, component of an amino-acid transport system. In Brucella suis biovar 1 (strain 1330), this protein is Leu/Ile/Val-binding protein homolog 1.